Reading from the N-terminus, the 327-residue chain is Cysteine synthase (327 aa).

Residue K65 is modified to N6-(pyridoxal phosphate)lysine. Residues N95, 200–204 (GTGGT), and S282 each bind pyridoxal 5'-phosphate.

Belongs to the cysteine synthase/cystathionine beta-synthase family. Pyridoxal 5'-phosphate is required as a cofactor.

It carries out the reaction O-acetyl-L-serine + hydrogen sulfide = L-cysteine + acetate. Its pathway is amino-acid biosynthesis; L-cysteine biosynthesis; L-cysteine from L-serine: step 2/2. The protein is Cysteine synthase (cysM) of Aquifex aeolicus (strain VF5).